We begin with the raw amino-acid sequence, 589 residues long: Intermediate filament protein ifb-1 (589 aa).

Residues 1 to 42 (MSSHKESSEYEMQYRSTIQPRTAVRSQSRQSGNYVSGGNGAG) are disordered. The tract at residues 8 to 84 (SEYEMQYRST…LEATDKEKKT (77 aa)) is head. A compositionally biased stretch (polar residues) spans 14-30 (YRSTIQPRTAVRSQSRQ). The IF rod domain occupies 81-433 (EKKTLQGLND…KMLEGEETRV (353 aa)). Positions 85 to 116 (LQGLNDRLGNYIDRVKKLEEQNRKLVADLDEL) are coil 1A. The tract at residues 117–130 (RGKWGKDTSEIKIK) is linker 1. Residues 131-268 (YSESLSTARK…RVHEQEVKEL (138 aa)) are coil 1B. Residues 269 to 285 (QALLAQAPADTREFFKN) form a linker 12 region. The tract at residues 286 to 433 (ELALAIRDIK…KMLEGEETRV (148 aa)) is coil 2. Residues 434–588 (GLTQMVEQAV…THTQKTIQSG (155 aa)) are tail. The disordered stretch occupies residues 444–470 (KTHSLQQQENTDSTRSVRGEVSTKTTF). The LTD domain maps to 466 to 584 (TKTTFQRSAK…EERATHTQKT (119 aa)).

This sequence belongs to the intermediate filament family. As to quaternary structure, forms some heteromeric filaments with ifa-1, ifa-2, ifa-3 and probably ifa-4. In terms of tissue distribution, expressed in epidermal cells. Expressed in amphid sensory neurons, the excretory cells, the vulva, the uterus, the rectum and some neurons of the tail. Isoform a and isoform b display a similar pattern of expression. Isoform a is predominant in pharyngeal tonofilaments.

It is found in the cytoplasm. In terms of biological role, cytoplasmic intermediate filaments provide mechanical strength to cells. Essential protein, involved in attachment structures in epidermal cells that connect muscles to the external cuticle. Required in morphogenesis and epidermal integrity. Probable component of embryonic epidermal attachment structures. Functions in larval muscle attachment independently of ifa-2. This is Intermediate filament protein ifb-1 (ifb-1) from Caenorhabditis elegans.